The following is a 569-amino-acid chain: Glutamate--tRNA ligase (569 aa).

The short motif at 99–109 (PEPNGYPTLGH) is the 'HIGH' region element.

The protein belongs to the class-I aminoacyl-tRNA synthetase family. Glutamate--tRNA ligase type 2 subfamily.

The protein resides in the cytoplasm. The catalysed reaction is tRNA(Glu) + L-glutamate + ATP = L-glutamyl-tRNA(Glu) + AMP + diphosphate. Catalyzes the attachment of glutamate to tRNA(Glu) in a two-step reaction: glutamate is first activated by ATP to form Glu-AMP and then transferred to the acceptor end of tRNA(Glu). In Korarchaeum cryptofilum (strain OPF8), this protein is Glutamate--tRNA ligase.